The chain runs to 517 residues: Bifunctional purine biosynthesis protein PurH (517 aa).

The region spanning 1 to 151 (MTQERKIKRA…KNFAHVAVLC (151 aa)) is the MGS-like domain.

Belongs to the PurH family.

It catalyses the reaction (6R)-10-formyltetrahydrofolate + 5-amino-1-(5-phospho-beta-D-ribosyl)imidazole-4-carboxamide = 5-formamido-1-(5-phospho-D-ribosyl)imidazole-4-carboxamide + (6S)-5,6,7,8-tetrahydrofolate. It carries out the reaction IMP + H2O = 5-formamido-1-(5-phospho-D-ribosyl)imidazole-4-carboxamide. Its pathway is purine metabolism; IMP biosynthesis via de novo pathway; 5-formamido-1-(5-phospho-D-ribosyl)imidazole-4-carboxamide from 5-amino-1-(5-phospho-D-ribosyl)imidazole-4-carboxamide (10-formyl THF route): step 1/1. It functions in the pathway purine metabolism; IMP biosynthesis via de novo pathway; IMP from 5-formamido-1-(5-phospho-D-ribosyl)imidazole-4-carboxamide: step 1/1. This Elusimicrobium minutum (strain Pei191) protein is Bifunctional purine biosynthesis protein PurH.